A 441-amino-acid chain; its full sequence is Protein FAM83A (441 aa).

Disordered regions lie at residues 81–108 (SNDN…MNSD) and 312–368 (GMSI…SPLQ). Residues 314–327 (SIMSDSNPESINTT) are compositionally biased toward polar residues. Low complexity predominate over residues 328–354 (SEPFSSISTASISNDSQRPKSPVSTTP).

It belongs to the FAM83 family.

It is found in the cytoplasm. May function in the epidermal growth factor receptor/EGFR signaling pathway. The sequence is that of Protein FAM83A from Xenopus tropicalis (Western clawed frog).